The chain runs to 441 residues: UBX domain-containing protein 6 (441 aa).

The interval Met-1–Ala-10 is mediates interaction with LMAN1. Disordered regions lie at residues Ile-12–Ala-57, Arg-62–Asn-81, and Glu-86–Ser-113. The segment covering Val-27 to Pro-36 has biased composition (basic and acidic residues). The VCP/p97-interacting motif (VIM) stretch occupies residues Glu-51–Leu-63. The 70-residue stretch at Val-175–Glu-244 folds into the PUB domain. Positions Arg-332–Phe-408 constitute a UBX domain.

As to quaternary structure, interacts with VCP through the PUB domain (via C-terminus) and VIM motif (via N-terminus); the interaction is direct. Forms a ternary complex with CAV1 and VCP. Interacts with SYVN1. Interacts with HERPUD1. Interacts with VCPKMT. May interact with DERL1. Interacts with PLAA, VCP and YOD1; may form a complex involved in macroautophagy. Interacts with LMAN1.

The protein localises to the cytoplasm. It is found in the cytosol. It localises to the membrane. Its subcellular location is the nucleus. The protein resides in the cytoskeleton. The protein localises to the microtubule organizing center. It is found in the centrosome. It localises to the early endosome membrane. Its subcellular location is the late endosome membrane. The protein resides in the lysosome membrane. Its function is as follows. May negatively regulate the ATPase activity of VCP, an ATP-driven segregase that associates with different cofactors to control a wide variety of cellular processes. As a cofactor of VCP, it may play a role in the transport of CAV1 to lysosomes for degradation. It may also play a role in endoplasmic reticulum-associated degradation (ERAD) of misfolded proteins. Together with VCP and other cofactors, it may play a role in macroautophagy, regulating for instance the clearance of damaged lysosomes. The polypeptide is UBX domain-containing protein 6 (Bos taurus (Bovine)).